The sequence spans 515 residues: 2-isopropylmalate synthase (515 aa).

One can recognise a Pyruvate carboxyltransferase domain in the interval 5 to 268 (VIIFDTTLRD…VCGIDASQIV (264 aa)). Mn(2+) contacts are provided by Asp-14, His-202, His-204, and Asn-239. The segment at 394-515 (HFISLSQHSE…QAKLNAQMAP (122 aa)) is regulatory domain.

This sequence belongs to the alpha-IPM synthase/homocitrate synthase family. LeuA type 1 subfamily. As to quaternary structure, homodimer. It depends on Mn(2+) as a cofactor.

It is found in the cytoplasm. It carries out the reaction 3-methyl-2-oxobutanoate + acetyl-CoA + H2O = (2S)-2-isopropylmalate + CoA + H(+). The protein operates within amino-acid biosynthesis; L-leucine biosynthesis; L-leucine from 3-methyl-2-oxobutanoate: step 1/4. Functionally, catalyzes the condensation of the acetyl group of acetyl-CoA with 3-methyl-2-oxobutanoate (2-ketoisovalerate) to form 3-carboxy-3-hydroxy-4-methylpentanoate (2-isopropylmalate). The polypeptide is 2-isopropylmalate synthase (Polynucleobacter asymbioticus (strain DSM 18221 / CIP 109841 / QLW-P1DMWA-1) (Polynucleobacter necessarius subsp. asymbioticus)).